The sequence spans 388 residues: Protein DJ-1 homolog D (388 aa).

PfpI endopeptidase domains follow at residues 5–190 (RTVL…KALG) and 198–383 (KRIL…ALLG). The active-site Nucleophile is Cys-120. Cys-120 is subject to Cysteine sulfenic acid (-SOH). The active site involves His-121. Residue Cys-313 is the Nucleophile of the active site. Cys-313 carries the cysteine sulfinic acid (-SO2H) modification. His-314 is a catalytic residue.

This sequence belongs to the peptidase C56 family. Homotrimer. In terms of processing, cys-120 and Cys-313 are oxidized to sulfinic acid.

It carries out the reaction (R)-S-lactoylglutathione = methylglyoxal + glutathione. Functionally, possesses glyoxalase I activity. Catalyzes the conversion of hemimercaptal, formed from methylglyoxal and glutathione, to S-lactoylglutathione. May be involved in oxidative stress response. This is Protein DJ-1 homolog D (DJ1D) from Arabidopsis thaliana (Mouse-ear cress).